Here is a 180-residue protein sequence, read N- to C-terminus: ATP-dependent protease subunit HslV (180 aa).

Residue threonine 8 is part of the active site. Na(+)-binding residues include glycine 165, aspartate 168, and threonine 171.

The protein belongs to the peptidase T1B family. HslV subfamily. A double ring-shaped homohexamer of HslV is capped on each side by a ring-shaped HslU homohexamer. The assembly of the HslU/HslV complex is dependent on binding of ATP.

The protein resides in the cytoplasm. It carries out the reaction ATP-dependent cleavage of peptide bonds with broad specificity.. Allosterically activated by HslU binding. Its function is as follows. Protease subunit of a proteasome-like degradation complex believed to be a general protein degrading machinery. The polypeptide is ATP-dependent protease subunit HslV (Lactiplantibacillus plantarum (strain ATCC BAA-793 / NCIMB 8826 / WCFS1) (Lactobacillus plantarum)).